A 425-amino-acid chain; its full sequence is Ribulose bisphosphate carboxylase/oxygenase activase B, chloroplastic (425 aa).

A chloroplast-targeting transit peptide spans 1 to 43 (MASAFSSTVGAPASTPTIFLGKKVKNYYHGGNKMKSRVVRVMA). Residue 153-160 (GGKGQGKS) participates in ATP binding.

Belongs to the RuBisCO activase family.

It is found in the plastid. Its subcellular location is the chloroplast stroma. Activation of RuBisCO (ribulose-1,5-bisphosphate carboxylase/oxygenase; EC 4.1.1.39) involves the ATP-dependent carboxylation of the epsilon-amino group of lysine leading to a carbamate structure. The protein is Ribulose bisphosphate carboxylase/oxygenase activase B, chloroplastic (RCAB) of Hordeum vulgare (Barley).